Reading from the N-terminus, the 637-residue chain is Chaperone protein dnaK2 (637 aa).

Position 197 is a phosphothreonine; by autocatalysis (T197). Residues 602-637 (AAAGGAAPGGDAGASAASGGGDASDDVIDAEFTETK) are disordered. Over residues 603 to 623 (AAGGAAPGGDAGASAASGGGD) the composition is skewed to gly residues. A compositionally biased stretch (acidic residues) spans 624–637 (ASDDVIDAEFTETK).

The protein belongs to the heat shock protein 70 family.

Its function is as follows. Acts as a chaperone. This Parasynechococcus marenigrum (strain WH8102) protein is Chaperone protein dnaK2 (dnaK2).